We begin with the raw amino-acid sequence, 175 residues long: MRDRRSSYEYEDLLACGRGELFGAGNAQLPLPPMLMFDRITTITEDGGEFGKGHVRAELDVNPDLWFFACHFKNDPVMPGCLGLDAMWQMVGFFLGWVGGEGPGRALGLGELKFTGQVLPNISKVVYNVDIKRVMRSKLWLGIADGWLSADDEIIYRAKDLKVGLFKQTAQPVAG.

Histidine 71 is a catalytic residue.

It belongs to the thioester dehydratase family. FabA subfamily. In terms of assembly, homodimer.

The protein resides in the cytoplasm. The catalysed reaction is a (3R)-hydroxyacyl-[ACP] = a (2E)-enoyl-[ACP] + H2O. It carries out the reaction (3R)-hydroxydecanoyl-[ACP] = (2E)-decenoyl-[ACP] + H2O. It catalyses the reaction (2E)-decenoyl-[ACP] = (3Z)-decenoyl-[ACP]. It participates in lipid metabolism; fatty acid biosynthesis. Necessary for the introduction of cis unsaturation into fatty acids. Catalyzes the dehydration of (3R)-3-hydroxydecanoyl-ACP to E-(2)-decenoyl-ACP and then its isomerization to Z-(3)-decenoyl-ACP. Can catalyze the dehydratase reaction for beta-hydroxyacyl-ACPs with saturated chain lengths up to 16:0, being most active on intermediate chain length. In Rhodopseudomonas palustris (strain ATCC BAA-98 / CGA009), this protein is 3-hydroxydecanoyl-[acyl-carrier-protein] dehydratase.